The primary structure comprises 101 residues: Trp operon repressor homolog (101 aa).

A DNA-binding region spans residues 59-82; the sequence is QREIQQNLNTSAATITRGSNMIKT.

Belongs to the TrpR family. Homodimer.

It localises to the cytoplasm. Its function is as follows. This protein is an aporepressor. When complexed with L-tryptophan it binds the operator region of the trp operon and prevents the initiation of transcription. The chain is Trp operon repressor homolog from Haemophilus influenzae (strain 86-028NP).